Here is a 104-residue protein sequence, read N- to C-terminus: MNNTEFHQLVDNELQLIEEAIDESGADIDYETTGNVMTLEFDDRSQIIINRQEPMQEIWLASKSGGFHFQYKAGQWICSKTGVEFAHMVKQECEKHAGESIDWA.

Belongs to the frataxin family.

Its function is as follows. Involved in iron-sulfur (Fe-S) cluster assembly. May act as a regulator of Fe-S biogenesis. This chain is Iron-sulfur cluster assembly protein CyaY, found in Vibrio vulnificus (strain CMCP6).